A 351-amino-acid chain; its full sequence is Alcohol dehydrogenase 2 (351 aa).

Zn(2+) contacts are provided by cysteine 47, histidine 70, cysteine 101, cysteine 104, cysteine 107, cysteine 115, and cysteine 157. NAD(+) contacts are provided by residues glycine 181–glycine 187, aspartate 205, lysine 210, valine 272–leucine 274, and arginine 344.

Belongs to the zinc-containing alcohol dehydrogenase family. In terms of assembly, homotetramer. Requires Zn(2+) as cofactor.

The enzyme catalyses a secondary alcohol + NAD(+) = a ketone + NADH + H(+). In terms of biological role, versatile oxidoreductase that catalyzes the oxidation and reduction of a broad range of substrates. Preferentially oxidizes secondary alcohols. Has highest activity for racemic 2-octanol. Is also an efficient reductase for selected substrates. Substrate selectivity was found for medium chain lipophilic ketones. Has highest activities for 2-octanone, 2-nonanone and 2-decanone. The enzyme is (S)-selective in the reduction direction and produces exclusively the (S)-enantiomer. The protein is Alcohol dehydrogenase 2 (ADH2) of Yarrowia lipolytica (strain CLIB 122 / E 150) (Yeast).